The chain runs to 91 residues: Protein xpaR7 (91 aa).

In Bacillus licheniformis, this protein is Protein xpaR7 (xpaR7).